The following is a 236-amino-acid chain: MTKRYWNIDLEEMMRAGVHFGHGTRKWNPRMAPYISAKRKGIHIINLTRTARFLSEACDLVFDAASKGKQFLIVGTKNKAADLVSRAAIRARCHYVNKKWLGGMLTNWSTTEKRLHKFRDLRTEQKTEGFNRLPKRDAAVLKRQLSRLKTYLGGIKYMTGLPDIVIIIDQQEEYTALRECITLGIPTISLIDTNCNPDLADISIPANDDAIASIRFTLNKLVFAICEGRSSYIQNS.

This sequence belongs to the universal ribosomal protein uS2 family.

It is found in the plastid. The protein resides in the chloroplast. The protein is Small ribosomal subunit protein uS2c (rps2) of Barbarea verna (Land cress).